A 648-amino-acid chain; its full sequence is Macrolide export ATP-binding/permease protein MacB (648 aa).

The region spanning 5 to 243 (LELKDIRRSY…AGGTEPVVNT (239 aa)) is the ABC transporter domain. 41–48 (GASGSGKS) is an ATP binding site. Helical transmembrane passes span 273 to 293 (LLTM…VVVG), 523 to 543 (LFMT…VMNI), 576 to 596 (AVLV…LIAF), and 611 to 631 (PLAL…FGWL).

This sequence belongs to the ABC transporter superfamily. Macrolide exporter (TC 3.A.1.122) family. Homodimer. Part of the tripartite efflux system MacAB-TolC, which is composed of an inner membrane transporter, MacB, a periplasmic membrane fusion protein, MacA, and an outer membrane component, TolC. The complex forms a large protein conduit and can translocate molecules across both the inner and outer membranes. Interacts with MacA.

The protein localises to the cell inner membrane. In terms of biological role, part of the tripartite efflux system MacAB-TolC. MacB is a non-canonical ABC transporter that contains transmembrane domains (TMD), which form a pore in the inner membrane, and an ATP-binding domain (NBD), which is responsible for energy generation. Confers resistance against macrolides. The polypeptide is Macrolide export ATP-binding/permease protein MacB (Escherichia coli O157:H7).